A 280-amino-acid chain; its full sequence is Fructose-1,6-bisphosphatase class 1 (280 aa).

E64, D83, L85, and D86 together coordinate Mg(2+). Residues D86 to S89, Y189, and K220 each bind substrate. E226 is a Mg(2+) binding site.

Belongs to the FBPase class 1 family. In terms of assembly, homotetramer. Requires Mg(2+) as cofactor.

Its subcellular location is the cytoplasm. It catalyses the reaction beta-D-fructose 1,6-bisphosphate + H2O = beta-D-fructose 6-phosphate + phosphate. It functions in the pathway carbohydrate biosynthesis; gluconeogenesis. The polypeptide is Fructose-1,6-bisphosphatase class 1 (Campylobacter jejuni subsp. jejuni serotype O:23/36 (strain 81-176)).